We begin with the raw amino-acid sequence, 480 residues long: Zinc metalloproteinase/disintegrin (480 aa).

The N-terminal stretch at 1 to 20 (MIQVLLITICLAVFPFQGSS) is a signal peptide. The propeptide occupies 21–190 (IVLDSGNLNE…KASQLNVSPD (170 aa)). Residues 197-391 (RFIKLAIYVD…HSPQCILNDP (195 aa)) form the Peptidase M12B domain. Residues Asn259 and Asn279 are each glycosylated (N-linked (GlcNAc...) asparagine). Disulfide bonds link Cys308-Cys386, Cys348-Cys370, Cys350-Cys353, Cys413-Cys428, Cys415-Cys423, Cys422-Cys445, Cys436-Cys442, Cys441-Cys466, and Cys454-Cys473. Position 333 (His333) interacts with Zn(2+). The active site involves Glu334. Residues His337 and His343 each coordinate Zn(2+). One can recognise a Disintegrin domain in the interval 399–480 (TPVSGNELLE…AGCPRNPFHA (82 aa)). Residues 458–460 (RGD) carry the Cell attachment site motif.

Belongs to the venom metalloproteinase (M12B) family. P-II subfamily. P-IIa sub-subfamily. Monomer. Zn(2+) is required as a cofactor. As to expression, expressed by the venom gland.

It localises to the secreted. Its function is as follows. Impairs hemostasis in the envenomed animal. Functionally, inhibits platelet aggregation and bone resorption. This is Zinc metalloproteinase/disintegrin from Gloydius halys (Chinese water mocassin).